Here is a 67-residue protein sequence, read N- to C-terminus: Arasin 2 (67 aa).

The signal sequence occupies residues 1–25 (MERRTLLVVLLVCSCVVAAAAEASP). A disordered region spans residues 22–44 (EASPSRWPSPGRPRPFPGRPNPI). Pro residues predominate over residues 31–44 (PGRPRPFPGRPNPI). 2 disulfides stabilise this stretch: Cys50/Cys59 and Cys52/Cys57.

As to quaternary structure, interacts with chitin through the N-terminal region (26-48). This interaction may be important, since chitin is a component of the fungal cell wall, as well as of the crab exoskeleton (permitting a possible action of arasin in wound healing in case of lesions). Disulfide bonds are important for activity especially against Gram-negative bacteria, since the linearization of the peptide causes a strong decrease of activity on these bacteria. As to expression, mainly expressed in hemocytes. No or very low expression in heart, gills, inestines, and epidermis.

Antimicrobial peptide that has a large activity spectrum with activity against Gram-positive, Gram-negative bacteria, as well as against fungi. Shows activity at micromolar concentrations. Displays minimal inhibitory concentration (MIC) values lower than minimal bactericidal concentrations (MBC). May have a dual mode of action depending on the peptide concentrations. At MIC concentrations, the peptide penetrates into the cytoplasm of target cells (tested on the Gram-negative E.coli). The two inner membrane proteins YgdD and SbmA may be required for this uptake. At concentrations higher than MIC, arasin may act by disrupting membranes. Does not show hemolytic activity. The sequence is that of Arasin 2 from Hyas araneus (Atlantic lyre crab).